Consider the following 173-residue polypeptide: Shikimate kinase 1 (173 aa).

14 to 19 (GAGKST) is a binding site for ATP. Ser18 contacts Mg(2+). 3 residues coordinate substrate: Asp36, Arg60, and Gly82. Residue Arg120 participates in ATP binding. Residue Arg140 coordinates substrate. Position 157 (Gln157) interacts with ATP.

It belongs to the shikimate kinase family. As to quaternary structure, monomer. The cofactor is Mg(2+).

It localises to the cytoplasm. It catalyses the reaction shikimate + ATP = 3-phosphoshikimate + ADP + H(+). Its pathway is metabolic intermediate biosynthesis; chorismate biosynthesis; chorismate from D-erythrose 4-phosphate and phosphoenolpyruvate: step 5/7. Its function is as follows. Catalyzes the specific phosphorylation of the 3-hydroxyl group of shikimic acid using ATP as a cosubstrate. The protein is Shikimate kinase 1 of Yersinia pseudotuberculosis serotype O:1b (strain IP 31758).